Consider the following 297-residue polypeptide: 4-hydroxybenzoate octaprenyltransferase (297 aa).

The next 9 helical transmembrane spans lie at 29 to 49, 55 to 75, 102 to 122, 124 to 141, 146 to 166, 169 to 189, 219 to 239, 241 to 261, and 270 to 290; these read IGTY…AEGV, LFIF…VNDF, AWTL…LTNA, TVYL…YPFM, FYPQ…AFTA, GSLP…TVAY, VIIV…GVRF, LGQW…WEFW, and VCFK…AGIV.

It belongs to the UbiA prenyltransferase family. Mg(2+) serves as cofactor.

The protein localises to the cell inner membrane. The enzyme catalyses all-trans-octaprenyl diphosphate + 4-hydroxybenzoate = 4-hydroxy-3-(all-trans-octaprenyl)benzoate + diphosphate. It functions in the pathway cofactor biosynthesis; ubiquinone biosynthesis. Functionally, catalyzes the prenylation of para-hydroxybenzoate (PHB) with an all-trans polyprenyl group. Mediates the second step in the final reaction sequence of ubiquinone-8 (UQ-8) biosynthesis, which is the condensation of the polyisoprenoid side chain with PHB, generating the first membrane-bound Q intermediate 3-octaprenyl-4-hydroxybenzoate. The protein is 4-hydroxybenzoate octaprenyltransferase of Stutzerimonas stutzeri (strain A1501) (Pseudomonas stutzeri).